The following is a 418-amino-acid chain: Actin-related protein 3 (418 aa).

An N-acetylalanine modification is found at alanine 2.

It belongs to the actin family. ARP3 subfamily. Component of the Arp2/3 complex composed of ACTR2/ARP2, ACTR3/ARP3, ARPC1B/p41-ARC, ARPC2/p34-ARC, ARPC3/p21-ARC, ARPC4/p20-ARC and ARPC5/p16-ARC. As to expression, detected in fibroblasts.

Its subcellular location is the cytoplasm. It localises to the cytoskeleton. The protein localises to the cell projection. The protein resides in the nucleus. ATP-binding component of the Arp2/3 complex, a multiprotein complex that mediates actin polymerization upon stimulation by nucleation-promoting factor (NPF). The Arp2/3 complex mediates the formation of branched actin networks in the cytoplasm, providing the force for cell motility. Seems to contact the pointed end of the daughter actin filament. In addition to its role in the cytoplasmic cytoskeleton, the Arp2/3 complex also promotes actin polymerization in the nucleus, thereby regulating gene transcription and repair of damaged DNA. The Arp2/3 complex promotes homologous recombination (HR) repair in response to DNA damage by promoting nuclear actin polymerization, leading to drive motility of double-strand breaks (DSBs). This chain is Actin-related protein 3 (ACTR3), found in Gallus gallus (Chicken).